A 131-amino-acid chain; its full sequence is MSLSDPIGDMIARIKNAQVRNHKKVALPSSNFKVKIADILKSEGFIKDYKIETENNKPTLSVDLKYYSGNPVISTFERVSKPGRRIFSSADSLPKINGGLGIAIVSTPKGVMTDIEARKQKVGGEIICKVF.

It belongs to the universal ribosomal protein uS8 family. As to quaternary structure, part of the 30S ribosomal subunit. Contacts proteins S5 and S12.

In terms of biological role, one of the primary rRNA binding proteins, it binds directly to 16S rRNA central domain where it helps coordinate assembly of the platform of the 30S subunit. The protein is Small ribosomal subunit protein uS8 of Pelagibacter ubique (strain HTCC1062).